We begin with the raw amino-acid sequence, 406 residues long: MSVLSGLASEPRTPLSSKARMKRLPKKNQNEKYRLKYLRLRRAAKATVFENAAVCDEIARLEEKFLKAKEERRYLLKKLLQIHALTEGEPQAAAPSHSSSLPLAYGVTSSVGTIQGAGPSTGAEEPFAKKSKKEKKEKGKENSKLEVLKKTSKRKKMEGGARKLVRPIALDPSGQPVFPIGLGGLTVYSLGEIITNRPGFHDENAIYPVGYCSTRVYASMKCPDQKCLYTCQIKDGGVQPQFEIVPEDDPRNTIVGSSADACYEELLRAISAATGKLMPNPLSCGADFFGFSHPTIHNLIQSCPEAQNCVNYQWVKFDACKPRKGQLSQELPENDAAMSLEAFPTQTFDDDHEDSILPGSLDLPELQHEAFVSSYQPEFLTHEPLVDTDLQHLKSPSQCSPIQSSD.

2 disordered regions span residues 1 to 26 and 116 to 144; these read MSVL…RLPK and GAGP…ENSK. N-acetylserine is present on S2. Residue T13 is modified to Phosphothreonine. Over residues 134–144 the composition is skewed to basic and acidic residues; that stretch reads EKKEKGKENSK. The FYR N-terminal domain maps to 177-236; that stretch reads VFPIGLGGLTVYSLGEIITNRPGFHDENAIYPVGYCSTRVYASMKCPDQKCLYTCQIKDG. An FYR C-terminal domain is found at 237-316; it reads GVQPQFEIVP…QNCVNYQWVK (80 aa).

The protein belongs to the TBRG1 family. As to quaternary structure, interacts with CDKN2A and MDM2. Ubiquitinated; mediated by MDM2 and leading to its subsequent proteasomal degradation.

Its subcellular location is the nucleus. Functionally, acts as a growth inhibitor. Can activate p53/TP53, causes G1 arrest and collaborates with CDKN2A to restrict proliferation, but does not require either protein to inhibit DNA synthesis. Redistributes CDKN2A into the nucleoplasm. Involved in maintaining chromosomal stability. The chain is Transforming growth factor beta regulator 1 (Tbrg1) from Rattus norvegicus (Rat).